The primary structure comprises 264 residues: Thymidylate synthase (264 aa).

Arg21 provides a ligand contact to dUMP. His51 is a (6R)-5,10-methylene-5,6,7,8-tetrahydrofolate binding site. Position 126–127 (126–127 (RR)) interacts with dUMP. Cys146 (nucleophile) is an active-site residue. Residues 166–169 (RSCD), Asn177, and 207–209 (HLY) contribute to the dUMP site. Asp169 is a binding site for (6R)-5,10-methylene-5,6,7,8-tetrahydrofolate. Ala263 contacts (6R)-5,10-methylene-5,6,7,8-tetrahydrofolate.

Belongs to the thymidylate synthase family. Bacterial-type ThyA subfamily. Homodimer.

It localises to the cytoplasm. The enzyme catalyses dUMP + (6R)-5,10-methylene-5,6,7,8-tetrahydrofolate = 7,8-dihydrofolate + dTMP. It participates in pyrimidine metabolism; dTTP biosynthesis. Catalyzes the reductive methylation of 2'-deoxyuridine-5'-monophosphate (dUMP) to 2'-deoxythymidine-5'-monophosphate (dTMP) while utilizing 5,10-methylenetetrahydrofolate (mTHF) as the methyl donor and reductant in the reaction, yielding dihydrofolate (DHF) as a by-product. This enzymatic reaction provides an intracellular de novo source of dTMP, an essential precursor for DNA biosynthesis. The sequence is that of Thymidylate synthase from Yersinia pseudotuberculosis serotype O:1b (strain IP 31758).